A 361-amino-acid polypeptide reads, in one-letter code: Inhibin alpha chain (361 aa).

The N-terminal stretch at 1-21 (MLPLLLPLQLLLLMVMKGGHG) is a signal peptide. Positions 22-64 (CQGPELDRELVLAKVRALVLDALGPPNASKDGGKPVAQRLTRR) are excised as a propeptide. The interval 45–82 (GPPNASKDGGKPVAQRLTRRHAHTGGSTRRSMENEDED) is disordered. Asn48, Asn144, and Asn266 each carry an N-linked (GlcNAc...) asparagine glycan. A propeptide spans 65-230 (HAHTGGSTRR…PPSVGERARR (166 aa)) (inhibin alpha N-terminal region). 3 disulfides stabilise this stretch: Cys260–Cys323, Cys289–Cys358, and Cys293–Cys360.

Belongs to the TGF-beta family. Dimeric, linked by one or more disulfide bonds. Activin B is a dimer of alpha and beta-B. Inhibin A is a dimer of alpha and beta-A. Inhibin B is a dimer of alpha and beta-B. Interacts with TGFBR3L; this interaction regulates female fertility. Post-translationally, proteolytic processing yields a number of bioactive forms, consisting either solely of the mature alpha chain, of the most N-terminal propeptide linked through a disulfide bond to the mature alpha chain, or of the entire proprotein.

It localises to the secreted. Inhibins and activins inhibit and activate, respectively, the secretion of follitropin by the pituitary gland. Inhibins/activins are involved in regulating a number of diverse functions such as hypothalamic and pituitary hormone secretion, gonadal hormone secretion, germ cell development and maturation, erythroid differentiation, insulin secretion, nerve cell survival, embryonic axial development or bone growth, depending on their subunit composition. Inhibins appear to oppose the functions of activins. Functionally, inhibin A is a dimer of alpha/INHA and beta-A/INHBA that functions as a feedback regulator in the hypothalamic-pituitary-gonadal (HPG) axis. Inhibits the secretion of FSH from the anterior pituitary gland by acting on pituitary gonadotrope cells. Antagonizes activin A by binding to the proteoglycan, betaglycan, and forming a stable complex with and, thereby, sequestering type II activin receptors while excluding type I receptor. Its function is as follows. Inhibin B is a dimer of alpha and beta-B that plays a crucial role in the regulation of the reproductive system by inhibiting the secretion of follicle-stimulating hormone (FSH) from the anterior pituitary gland. Thereby, maintains reproductive homeostasis in both males and females. Acts as a more potent suppressor of FSH release than inhibin A. Functions as competitive receptor antagonist binding activin type II receptors with high affinity in the presence of the TGF-beta type III coreceptor/TGFBR3L. The protein is Inhibin alpha chain (INHA) of Trichosurus vulpecula (Brush-tailed possum).